A 339-amino-acid polypeptide reads, in one-letter code: Aspartate carbamoyltransferase catalytic subunit (339 aa).

R59 and T60 together coordinate carbamoyl phosphate. K87 lines the L-aspartate pocket. Carbamoyl phosphate contacts are provided by R109, H142, and Q145. Positions 182 and 253 each coordinate L-aspartate. Positions 294 and 295 each coordinate carbamoyl phosphate.

This sequence belongs to the aspartate/ornithine carbamoyltransferase superfamily. ATCase family. In terms of assembly, heterododecamer (2C3:3R2) of six catalytic PyrB chains organized as two trimers (C3), and six regulatory PyrI chains organized as three dimers (R2).

The catalysed reaction is carbamoyl phosphate + L-aspartate = N-carbamoyl-L-aspartate + phosphate + H(+). Its pathway is pyrimidine metabolism; UMP biosynthesis via de novo pathway; (S)-dihydroorotate from bicarbonate: step 2/3. Functionally, catalyzes the condensation of carbamoyl phosphate and aspartate to form carbamoyl aspartate and inorganic phosphate, the committed step in the de novo pyrimidine nucleotide biosynthesis pathway. The chain is Aspartate carbamoyltransferase catalytic subunit from Prochlorococcus marinus (strain NATL1A).